The chain runs to 312 residues: tRNA-dihydrouridine(16) synthase (312 aa).

FMN-binding positions include Pro-7–Glu-9 and Gln-68. Cys-98 (proton donor) is an active-site residue. FMN contacts are provided by residues Lys-139, Asn-200–Glu-202, and Gly-224–Arg-225.

It belongs to the Dus family. DusC subfamily. It depends on FMN as a cofactor.

The catalysed reaction is 5,6-dihydrouridine(16) in tRNA + NADP(+) = uridine(16) in tRNA + NADPH + H(+). It carries out the reaction 5,6-dihydrouridine(16) in tRNA + NAD(+) = uridine(16) in tRNA + NADH + H(+). Functionally, catalyzes the synthesis of 5,6-dihydrouridine (D), a modified base found in the D-loop of most tRNAs, via the reduction of the C5-C6 double bond in target uridines. Specifically modifies U16 in tRNAs. This is tRNA-dihydrouridine(16) synthase from Salmonella typhimurium (strain LT2 / SGSC1412 / ATCC 700720).